The primary structure comprises 263 residues: Small ribosomal subunit protein eS4 (263 aa).

In terms of domain architecture, S4 RNA-binding spans 42 to 104 (LPLIVFLRNR…TGEHFRLVYD (63 aa)).

It belongs to the eukaryotic ribosomal protein eS4 family.

In Pan paniscus (Pygmy chimpanzee), this protein is Small ribosomal subunit protein eS4 (RPS4Y1).